Here is a 487-residue protein sequence, read N- to C-terminus: Bifunctional protein GlmU (487 aa).

Positions 1-240 (MAEVTNCAAI…PEELSGVNDR (240 aa)) are pyrophosphorylase. Residues 12–15 (LAAG), Lys-26, Gln-83, and 88–89 (GT) contribute to the UDP-N-acetyl-alpha-D-glucosamine site. Residue Asp-113 coordinates Mg(2+). Residues Gly-150, Glu-165, Asn-180, and Asn-238 each contribute to the UDP-N-acetyl-alpha-D-glucosamine site. Asn-238 is a binding site for Mg(2+). The interval 241–261 (VQLAAAGRLLNRRMVEEAMRG) is linker. Residues 262–487 (GTTIVDPDTT…DAKANDQTTN (226 aa)) form an N-acetyltransferase region. Positions 343 and 361 each coordinate UDP-N-acetyl-alpha-D-glucosamine. Catalysis depends on His-373, which acts as the Proton acceptor. Positions 376 and 387 each coordinate UDP-N-acetyl-alpha-D-glucosamine. Residues Ala-390, 396–397 (NY), Ser-415, and Ala-433 each bind acetyl-CoA. Positions 449-487 (SGGKQRNIEGWVQKKRPGTPAAEAAGKAQDAKANDQTTN) are disordered.

In the N-terminal section; belongs to the N-acetylglucosamine-1-phosphate uridyltransferase family. It in the C-terminal section; belongs to the transferase hexapeptide repeat family. In terms of assembly, homotrimer. It depends on Mg(2+) as a cofactor.

The protein localises to the cytoplasm. It carries out the reaction alpha-D-glucosamine 1-phosphate + acetyl-CoA = N-acetyl-alpha-D-glucosamine 1-phosphate + CoA + H(+). The catalysed reaction is N-acetyl-alpha-D-glucosamine 1-phosphate + UTP + H(+) = UDP-N-acetyl-alpha-D-glucosamine + diphosphate. It functions in the pathway nucleotide-sugar biosynthesis; UDP-N-acetyl-alpha-D-glucosamine biosynthesis; N-acetyl-alpha-D-glucosamine 1-phosphate from alpha-D-glucosamine 6-phosphate (route II): step 2/2. The protein operates within nucleotide-sugar biosynthesis; UDP-N-acetyl-alpha-D-glucosamine biosynthesis; UDP-N-acetyl-alpha-D-glucosamine from N-acetyl-alpha-D-glucosamine 1-phosphate: step 1/1. It participates in bacterial outer membrane biogenesis; LPS lipid A biosynthesis. Catalyzes the last two sequential reactions in the de novo biosynthetic pathway for UDP-N-acetylglucosamine (UDP-GlcNAc). The C-terminal domain catalyzes the transfer of acetyl group from acetyl coenzyme A to glucosamine-1-phosphate (GlcN-1-P) to produce N-acetylglucosamine-1-phosphate (GlcNAc-1-P), which is converted into UDP-GlcNAc by the transfer of uridine 5-monophosphate (from uridine 5-triphosphate), a reaction catalyzed by the N-terminal domain. The protein is Bifunctional protein GlmU of Corynebacterium aurimucosum (strain ATCC 700975 / DSM 44827 / CIP 107346 / CN-1) (Corynebacterium nigricans).